We begin with the raw amino-acid sequence, 133 residues long: Serine/threonine-protein kinase RsbT (133 aa).

It carries out the reaction L-seryl-[protein] + ATP = O-phospho-L-seryl-[protein] + ADP + H(+). The enzyme catalyses L-threonyl-[protein] + ATP = O-phospho-L-threonyl-[protein] + ADP + H(+). In terms of biological role, provides the crucial link between the upstream module (communication of environmental stress) and the downstream module (integration of the environmental signals with signals of energy stress) that compose the signal transduction pathway controlling the sigma-B factor. Phosphorylates and inactivates its specific antagonist protein RsbS thanks to its serine kinase activity. Upon phosphorylation of RsbS, RsbT is released to stimulate RsbU, a PP2C phosphatase, thereby initiating the signaling cascade that ultimately activates sigma-B. The activity of the RsbU phosphatase may be stimulated by a long-lived interaction with RsbT and the serine kinase function of RsbT is not required to directly modify RsbU. Also phosphorylates RsbR thanks to its threonine kinase activity, preventing it to phosphorylate RsbT. The sequence is that of Serine/threonine-protein kinase RsbT (rsbT) from Bacillus subtilis (strain 168).